Reading from the N-terminus, the 239-residue chain is Large ribosomal subunit protein uL2 (239 aa).

A disordered region spans residues 205–224; sequence GGHQHCGRPKTVARGTSPGR.

This sequence belongs to the universal ribosomal protein uL2 family. As to quaternary structure, part of the 50S ribosomal subunit. Forms a bridge to the 30S subunit in the 70S ribosome.

One of the primary rRNA binding proteins. Required for association of the 30S and 50S subunits to form the 70S ribosome, for tRNA binding and peptide bond formation. It has been suggested to have peptidyltransferase activity; this is somewhat controversial. Makes several contacts with the 16S rRNA in the 70S ribosome. This Methanoculleus marisnigri (strain ATCC 35101 / DSM 1498 / JR1) protein is Large ribosomal subunit protein uL2.